Consider the following 142-residue polypeptide: Putative pre-16S rRNA nuclease (142 aa).

Belongs to the YqgF nuclease family.

It is found in the cytoplasm. Could be a nuclease involved in processing of the 5'-end of pre-16S rRNA. The polypeptide is Putative pre-16S rRNA nuclease (Staphylococcus epidermidis (strain ATCC 35984 / DSM 28319 / BCRC 17069 / CCUG 31568 / BM 3577 / RP62A)).